A 109-amino-acid polypeptide reads, in one-letter code: Nucleoid-associated protein plu3840 (109 aa).

Disordered stretches follow at residues Met-1–Lys-23 and Lys-89–Phe-109.

The protein belongs to the YbaB/EbfC family. As to quaternary structure, homodimer.

The protein localises to the cytoplasm. It is found in the nucleoid. Its function is as follows. Binds to DNA and alters its conformation. May be involved in regulation of gene expression, nucleoid organization and DNA protection. This is Nucleoid-associated protein plu3840 from Photorhabdus laumondii subsp. laumondii (strain DSM 15139 / CIP 105565 / TT01) (Photorhabdus luminescens subsp. laumondii).